Consider the following 74-residue polypeptide: MDAVQELERRIVELEIQSALQEDVIAGLNAMVAELRQTLDLQQAQLRLLYQKMQDRNPDAQEPYSLRDEIPPHY.

Belongs to the SlyX family.

In Neisseria meningitidis serogroup C (strain 053442), this protein is Protein SlyX homolog.